The primary structure comprises 467 residues: 3-isopropylmalate dehydratase large subunit (467 aa).

[4Fe-4S] cluster-binding residues include Cys347, Cys407, and Cys410.

The protein belongs to the aconitase/IPM isomerase family. LeuC type 1 subfamily. Heterodimer of LeuC and LeuD. It depends on [4Fe-4S] cluster as a cofactor.

The enzyme catalyses (2R,3S)-3-isopropylmalate = (2S)-2-isopropylmalate. It functions in the pathway amino-acid biosynthesis; L-leucine biosynthesis; L-leucine from 3-methyl-2-oxobutanoate: step 2/4. Functionally, catalyzes the isomerization between 2-isopropylmalate and 3-isopropylmalate, via the formation of 2-isopropylmaleate. In Nostoc sp. (strain PCC 7120 / SAG 25.82 / UTEX 2576), this protein is 3-isopropylmalate dehydratase large subunit.